A 1058-amino-acid polypeptide reads, in one-letter code: MPKRKDIQKIMVIGSGPIIIGQAAEFDYAGTQACLALKEEGYKVILVNSNPATIMTDKEIADKVYIEPLTLEFVNRIIRKERPDAILPTLGGQTGLNMAMALSKAGILDDLEIELLGTKLSAIDQAEDRDLFKQLMQELDQPIPESTIVKTVDEAVTFARDIGYPVIVRPAFTLGGTGGGICSSEEELCEITENGLKLSPVTQCLIERSIAGFKEIEYEVMRDSADNALVVCNMENFDPVGIHTGDSIVFAPTQTLSDIENQMLRDASLKIIRALKIEGGCNVQLALDPYSFKYYVIEVNPRVSRSSALASKATGYPIAKLAAKIAVGLTLDEMINPITGTTYAMFEPALDYVVAKIPRFPFDKFEHGERQLGTQMKATGEVMAIGRNLEESLLKACRSLEIGVCHNEMTSLSNISDEELVTKVIKAQDDRLFYLSEAIRRGYSIEELESLTKIDLFFLDKLLHIVEIEQELQMHVDHLESLKKAKRYGFSDQKIAEIWQKDESDIRAMRHSHSLYPVYKMVDTCAAEFDAKTPYFYSTYELENESVQSNKESILVLGSGPIRIGQGVEFDYATVHSVKAIQKAGYEAIIMNSNPETVSTDFSVSDKLYFEPLTFEDVMNVIDLEQPKGVIVQFGGQTAINLAQALSEAGVTILGTQVEDLDRAEDRDLFEKALKELGIPQPQGQTATNEEEALEAAKKIGFPVLVRPSYVLGGRAMEIVENKEDLREYIRTAVKASPEHPILVDSYIFGKECEVDAISDGKSVLIPGIMEHIERAGVHSGDSMAVYPPQQLSKQIQETIAEYTKRLAIGLNCIGMMNVQFVIKNEQVYVIEVNPRASRTVPFLSKVTGIPMAQIATKLILGQTLKDLGYEDGLYPQSPLVHIKAPVFSFTKLAQVDSLLGPEMKSTGEVMGSDTSLEKALYKAFEANNSHLSEFGQIVFTIADDSKAEALSLARRFKAIGYQIMATQGTAAYFAEQGLSACLVGKIGDAANDIPTLVRHGHVQAIVNTVGIKRTADKDGQMIRSSAIEQGVPLFTALDTAKAMLTVLESRCFNIEAI.

The tract at residues 1 to 401 (MPKRKDIQKI…SLLKACRSLE (401 aa)) is carboxyphosphate synthetic domain. ATP is bound by residues Arg129, Arg169, Gly175, Gly176, Arg208, Ile210, Glu215, Gly241, Ile242, His243, Gln284, and Glu298. The ATP-grasp 1 domain maps to 133–327 (KQLMQELDQP…IAKLAAKIAV (195 aa)). Mg(2+) is bound by residues Gln284, Glu298, and Asn300. Positions 284, 298, and 300 each coordinate Mn(2+). Positions 402–546 (IGVCHNEMTS…YSTYELENES (145 aa)) are oligomerization domain. The segment at 547-929 (VQSNKESILV…ALYKAFEANN (383 aa)) is carbamoyl phosphate synthetic domain. An ATP-grasp 2 domain is found at 671–861 (EKALKELGIP…MAQIATKLIL (191 aa)). 10 residues coordinate ATP: Arg707, Ser746, Ile748, Glu752, Gly777, Val778, His779, Ser780, Gln820, and Glu832. Residues Gln820, Glu832, and Asn834 each coordinate Mg(2+). Residues Gln820, Glu832, and Asn834 each contribute to the Mn(2+) site. Positions 930-1058 (SHLSEFGQIV…ESRCFNIEAI (129 aa)) constitute an MGS-like domain. Positions 930 to 1058 (SHLSEFGQIV…ESRCFNIEAI (129 aa)) are allosteric domain.

It belongs to the CarB family. As to quaternary structure, composed of two chains; the small (or glutamine) chain promotes the hydrolysis of glutamine to ammonia, which is used by the large (or ammonia) chain to synthesize carbamoyl phosphate. Tetramer of heterodimers (alpha,beta)4. The cofactor is Mg(2+). Requires Mn(2+) as cofactor.

It catalyses the reaction hydrogencarbonate + L-glutamine + 2 ATP + H2O = carbamoyl phosphate + L-glutamate + 2 ADP + phosphate + 2 H(+). It carries out the reaction hydrogencarbonate + NH4(+) + 2 ATP = carbamoyl phosphate + 2 ADP + phosphate + 2 H(+). It functions in the pathway amino-acid biosynthesis; L-arginine biosynthesis; carbamoyl phosphate from bicarbonate: step 1/1. It participates in pyrimidine metabolism; UMP biosynthesis via de novo pathway; (S)-dihydroorotate from bicarbonate: step 1/3. Large subunit of the glutamine-dependent carbamoyl phosphate synthetase (CPSase). CPSase catalyzes the formation of carbamoyl phosphate from the ammonia moiety of glutamine, carbonate, and phosphate donated by ATP, constituting the first step of 2 biosynthetic pathways, one leading to arginine and/or urea and the other to pyrimidine nucleotides. The large subunit (synthetase) binds the substrates ammonia (free or transferred from glutamine from the small subunit), hydrogencarbonate and ATP and carries out an ATP-coupled ligase reaction, activating hydrogencarbonate by forming carboxy phosphate which reacts with ammonia to form carbamoyl phosphate. This Streptococcus pyogenes serotype M1 protein is Carbamoyl phosphate synthase large chain.